The primary structure comprises 74 residues: Translation initiation factor IF-1 (74 aa).

The S1-like domain maps to 1 to 73; the sequence is MSNKEDIIKM…TKGRIVYRKK (73 aa).

This sequence belongs to the IF-1 family. Component of the 30S ribosomal translation pre-initiation complex which assembles on the 30S ribosome in the order IF-2 and IF-3, IF-1 and N-formylmethionyl-tRNA(fMet); mRNA recruitment can occur at any time during PIC assembly.

The protein localises to the cytoplasm. In terms of biological role, one of the essential components for the initiation of protein synthesis. Stabilizes the binding of IF-2 and IF-3 on the 30S subunit to which N-formylmethionyl-tRNA(fMet) subsequently binds. Helps modulate mRNA selection, yielding the 30S pre-initiation complex (PIC). Upon addition of the 50S ribosomal subunit IF-1, IF-2 and IF-3 are released leaving the mature 70S translation initiation complex. The chain is Translation initiation factor IF-1 from Thermosipho melanesiensis (strain DSM 12029 / CIP 104789 / BI429).